The chain runs to 327 residues: MSNQFDQLKKLSTIVCDSGDPELVKASGSQDATTNPSLILKVAQEPKFQELLNEAVVWGIRQNGDDLQTLSFILDKIQVNFALEIIKNIPGRISLEIDARLSFNVEAMVQRAVFLSQLFEAMGGDKKRLLVKIPGTWEGIRAVEFLEAKGIACNVTLIFNLVQAIAAAKAKATLISPFVGRIYDWWIAAYGDEGYSIDADPGVASVSNIYAYYKKFGIPTQIMAASFRTKEQVLALAGCDLLTISPKLLDELKKSQHPVKKELDPAEAKKLDVQPIELTESFFRFLMNEDAMATEKLAEGIRIFAGDTQILETAITEFIKQIAAEGA.

Lys132 (schiff-base intermediate with substrate) is an active-site residue.

This sequence belongs to the transaldolase family. Type 1 subfamily.

The protein localises to the cytoplasm. The catalysed reaction is D-sedoheptulose 7-phosphate + D-glyceraldehyde 3-phosphate = D-erythrose 4-phosphate + beta-D-fructose 6-phosphate. The protein operates within carbohydrate degradation; pentose phosphate pathway; D-glyceraldehyde 3-phosphate and beta-D-fructose 6-phosphate from D-ribose 5-phosphate and D-xylulose 5-phosphate (non-oxidative stage): step 2/3. Functionally, transaldolase is important for the balance of metabolites in the pentose-phosphate pathway. This Chlamydia pneumoniae (Chlamydophila pneumoniae) protein is Transaldolase.